A 220-amino-acid polypeptide reads, in one-letter code: Uracil-DNA glycosylase (220 aa).

The active-site Proton acceptor is Asp-65.

The protein belongs to the uracil-DNA glycosylase (UDG) superfamily. UNG family.

It localises to the cytoplasm. It carries out the reaction Hydrolyzes single-stranded DNA or mismatched double-stranded DNA and polynucleotides, releasing free uracil.. Excises uracil residues from the DNA which can arise as a result of misincorporation of dUMP residues by DNA polymerase or due to deamination of cytosine. The sequence is that of Uracil-DNA glycosylase from Bacteroides thetaiotaomicron (strain ATCC 29148 / DSM 2079 / JCM 5827 / CCUG 10774 / NCTC 10582 / VPI-5482 / E50).